The primary structure comprises 500 residues: Protein SLENDER RICE1-LIKE 2 (500 aa).

Positions 68–454 (KELEKMALRS…QRLYSASAWR (387 aa)) constitute a GRAS domain. A leucine repeat I (LRI) region spans residues 75 to 135 (LRSVNLMVTC…DALAERLFPA (61 aa)). Residues 154-219 (FRGFYEAGPY…GGPPFLRITG (66 aa)) are VHIID. Residues 185–189 (VHVID) carry the VHIID motif. The interval 233-265 (DVGLRLAEFARSCSVPFAFRGIAADQLDGLRPW) is leucine repeat II (LRII). Residues 275-376 (VAINSVLQLH…EAYLQGEIAD (102 aa)) form a PFYRE region. The short motif at 283–287 (LHRLL) is the LXXLL motif element. Residues 379–454 (SREGSSRVER…QRLYSASAWR (76 aa)) form an SAW region. The tract at residues 466–500 (SGAADAMEESQNSNTNGGGGGSSGGGHGALNQIMQ) is disordered. A compositionally biased stretch (gly residues) spans 481 to 493 (NGGGGGSSGGGHG).

This sequence belongs to the GRAS family. In terms of tissue distribution, expressed at low levels in leaf blades, leaf sheaths, rachis and flowers. Expressed in the embryo of immature seeds.

It localises to the nucleus. In terms of biological role, probable transcriptional regulator that acts as a repressor of the gibberellin (GA) signaling pathway. Its repressive activity is weaker than that of SLR1. Its overexpression prevents the GA signaling pathway and induces a dwarf phenotype in Arabidopsis thaliana plants. The sequence is that of Protein SLENDER RICE1-LIKE 2 from Oryza sativa subsp. japonica (Rice).